A 176-amino-acid chain; its full sequence is Large ribosomal subunit protein uL16 (176 aa).

This sequence belongs to the universal ribosomal protein uL16 family.

This Thermoplasma acidophilum (strain ATCC 25905 / DSM 1728 / JCM 9062 / NBRC 15155 / AMRC-C165) protein is Large ribosomal subunit protein uL16.